Reading from the N-terminus, the 322-residue chain is MRRSVFCGVGAFLPAKVITNDDLSLMVDTTDEWVFRRTGIKRRHVVEEGDTVSCMATEAAKIALEDAGVSATEVDLIIVATATPDKTMPSCATMVQGSLGCKNAAAFDINAACSGFLYALSIVDSMIKAGQANIALIIGSEAMSKVVDWTDRSTCVLFGDGAGAFVFKGQDETEKPGAGVMSTLLCADGSLGNVLYTNGGVASTGKAGYICMKGTVLFEHAVVKLSSAISALLESSALDVDSIDWFIPHQANVRIIDLVINRLGLSRDKVILSIDEHANTSSASIPLAMYEAKRAGRIKKGNLVLFAAIGAGITWGVSLLRL.

Residues Cys113 and His249 contribute to the active site. Positions 250–254 (QANVR) are ACP-binding. Asn279 is an active-site residue.

It belongs to the thiolase-like superfamily. FabH family. As to quaternary structure, homodimer.

It localises to the cytoplasm. The enzyme catalyses malonyl-[ACP] + acetyl-CoA + H(+) = 3-oxobutanoyl-[ACP] + CO2 + CoA. It participates in lipid metabolism; fatty acid biosynthesis. Catalyzes the condensation reaction of fatty acid synthesis by the addition to an acyl acceptor of two carbons from malonyl-ACP. Catalyzes the first condensation reaction which initiates fatty acid synthesis and may therefore play a role in governing the total rate of fatty acid production. Possesses both acetoacetyl-ACP synthase and acetyl transacylase activities. Its substrate specificity determines the biosynthesis of branched-chain and/or straight-chain of fatty acids. This is Beta-ketoacyl-[acyl-carrier-protein] synthase III from Anaplasma marginale (strain St. Maries).